We begin with the raw amino-acid sequence, 432 residues long: MSLNIETTQGLERRVAITVPTEIVSKAVREEFKRAAKNVRVDGFRKGHVPAHIIEQRFGASIRQDVLNDLLPRHFFDAVIAEKINIAGRPTFAIETFEEGKDLVFTATFEVYPEVKLQGLENIKVEKPTVEITEADIDKMIDVLRKQQATWAESQDVVKADDRVTIDFVGSVDGEEFEGGKATDFVLFMGQGRMIPGFEEGIIGHKAGEQFDIDVTFPAEYHAENLKGKAAKFAITLKKIENMVLPELTDEFVAKFGPNTKSVADLRAEIRKNMERELKNALVSRVKQQVINGLIEQNPIDVPASAVEEEINVLRNQAAQRFGGNAQQTAQLPRELFEAEATRRVQVGLLFSEVIKSNELKADEERAKAMIADIASAYEQPAEVVEYYSKNEELMNNIRNVVLEEQAVDAVLAKAQVTEKVSSFDEIMNPQA.

A PPIase FKBP-type domain is found at Asp-161 to Pro-246.

This sequence belongs to the FKBP-type PPIase family. Tig subfamily.

The protein resides in the cytoplasm. The enzyme catalyses [protein]-peptidylproline (omega=180) = [protein]-peptidylproline (omega=0). In terms of biological role, involved in protein export. Acts as a chaperone by maintaining the newly synthesized protein in an open conformation. Functions as a peptidyl-prolyl cis-trans isomerase. The chain is Trigger factor from Haemophilus influenzae (strain PittEE).